A 263-amino-acid chain; its full sequence is uncharacterized protein (263 aa).

The tract at residues 183–263 (APHDRPEGVP…PPSTNTKGAA (81 aa)) is disordered. Composition is skewed to polar residues over residues 230 to 239 (SRPTAPSRPS) and 253 to 263 (TPPSTNTKGAA).

Its function is as follows. Probably does not play a direct role in plasmid integration or excision. This is an uncharacterized protein from Saccharopolyspora erythraea (Streptomyces erythraeus).